Consider the following 412-residue polypeptide: CinA-like protein (412 aa).

Belongs to the CinA family.

The sequence is that of CinA-like protein from Syntrophotalea carbinolica (strain DSM 2380 / NBRC 103641 / GraBd1) (Pelobacter carbinolicus).